A 603-amino-acid polypeptide reads, in one-letter code: Sulfoacetaldehyde acetyltransferase (603 aa).

Belongs to the TPP enzyme family. It depends on Mg(2+) as a cofactor. Thiamine diphosphate serves as cofactor.

The enzyme catalyses acetyl phosphate + sulfite + H(+) = sulfoacetaldehyde + phosphate. In terms of biological role, catalyzes the degradation of sulfoacetaldehyde into sulfite and acetyl phosphate. Involved in sulfolactate degradation. The sequence is that of Sulfoacetaldehyde acetyltransferase from Roseovarius nubinhibens (strain ATCC BAA-591 / DSM 15170 / ISM).